The sequence spans 493 residues: EGF-containing fibulin-like extracellular matrix protein 1 (493 aa).

Positions 1–17 (MLKALFLTMLTLALVKS) are cleaved as a signal peptide. Positions 26–71 (YTQCTDGYEWDPVRQQCKDIDECDIVPDACKGGMKCVNHYGGYLCL) constitute an EGF-like 1; atypical domain. Positions 173-213 (DIDECTAGTHNCRADQVCINLRGSFACQCPPGYQKRGEQCV) constitute an EGF-like 2; calcium-binding domain. Intrachain disulfides connect cysteine 177-cysteine 190, cysteine 184-cysteine 199, cysteine 201-cysteine 212, cysteine 218-cysteine 228, cysteine 224-cysteine 237, cysteine 239-cysteine 252, cysteine 258-cysteine 268, cysteine 264-cysteine 277, cysteine 279-cysteine 292, cysteine 298-cysteine 309, cysteine 305-cysteine 318, cysteine 320-cysteine 332, cysteine 338-cysteine 350, cysteine 344-cysteine 359, and cysteine 365-cysteine 377. Residues 214-253 (DIDECTIPPYCHQRCVNTPGSFYCQCSPGFQLAANNYTCV) enclose the EGF-like 3; calcium-binding domain. N-linked (GlcNAc...) asparagine glycosylation is present at asparagine 249. Positions 254–293 (DINECDASNQCAQQCYNILGSFICQCNQGYELSSDRLNCE) constitute an EGF-like 4; calcium-binding domain. The interval 259-493 (DASNQCAQQC…LTIIVGPFSF (235 aa)) is mediates interaction with TIMP3. The EGF-like 5; calcium-binding domain occupies 294–333 (DIDECRTSSYLCQYQCVNEPGKFSCMCPQGYQVVRSRTCQ). One can recognise an EGF-like 6; calcium-binding domain in the interval 334–378 (DINECETTNECREDEMCWNYHGGFRCYPRNPCQDPYILTPENRCV).

This sequence belongs to the fibulin family. In terms of assembly, interacts with ECM1. Interacts with TIMP3. As to expression, in the eye, associated with photoreceptor outer and inner segment regions, the nerve fiber layer, outer nuclear layer and inner and outer plexiform layers of the retina.

It is found in the secreted. The protein localises to the extracellular space. Its subcellular location is the extracellular matrix. Functionally, binds EGFR, the EGF receptor, inducing EGFR autophosphorylation and the activation of downstream signaling pathways. May play a role in cell adhesion and migration. May function as a negative regulator of chondrocyte differentiation. In the olfactory epithelium, it may regulate glial cell migration, differentiation and the ability of glial cells to support neuronal neurite outgrowth. The polypeptide is EGF-containing fibulin-like extracellular matrix protein 1 (EFEMP1) (Homo sapiens (Human)).